The sequence spans 410 residues: MCPYRLDPEGADTHGETARLREQGPIARVELQDGVLAWSVHDYAVAKQIMADERFSKNPRKNWPAYINGEISNGWPLITWVAMDTMATQDGADHARLRKLLLKAFTERRVESMRPHIEKTVKELLDNMAAKADDEIVDIKEMFHAELPTRLMCDLFGVPEERRAEVLAGGHKNIDTRISSEAAEANLGQWQEAISDLVEYKRHHPGDDLTSALIEARDEGSRLSDSELIGTLHLLLGAGSETLVNALAHSSLALLVDADLRKKVTSGEIPWVNVWEETLRVESPVAHLPFRYATEDFEIGGVKISKGDPLLVDFAGIGRDPAVHSDAPDEFDALRPDKTHLSFGHGVHYCLGARLAKHAWMIGIPALFERFPDMELAVRRDELKGQGSFVVNGHASLPVHLKGRAAALAR.

C350 lines the heme pocket.

This sequence belongs to the cytochrome P450 family. Heme serves as cofactor.

The catalysed reaction is 2-hydroxy-5-methyl-1-naphthoate + 2 reduced [2Fe-2S]-[ferredoxin] + O2 + 2 H(+) = 2,7-dihydroxy-5-methyl-1-naphthoate + 2 oxidized [2Fe-2S]-[ferredoxin] + H2O. The protein operates within antibiotic biosynthesis. In terms of biological role, involved in the biosynthesis of the naphthoic acid (NA) moiety in the chromophore of the enedyine antitumor antibiotic neocarzinostatin (NCS). Catalyzes the hydroxylation at C-7 position of 2-hydroxy-5-methyl-1-naphthoate to yield 2,7-dihydroxy-5-methyl-1-naphthoate. The polypeptide is 2-hydroxy-5-methyl-1-naphthoate 7-hydroxylase (Streptomyces carzinostaticus).